A 338-amino-acid chain; its full sequence is Lipoate-protein ligase A (338 aa).

In terms of domain architecture, BPL/LPL catalytic spans 29–216; that stretch reads PATQRVLFLW…AFFAHYGERV (188 aa). Residues Arg-71, 76-79, and Lys-134 each bind ATP; that span reads GAVF. Lys-134 lines the (R)-lipoate pocket.

This sequence belongs to the LplA family. As to quaternary structure, monomer.

Its subcellular location is the cytoplasm. The catalysed reaction is L-lysyl-[lipoyl-carrier protein] + (R)-lipoate + ATP = N(6)-[(R)-lipoyl]-L-lysyl-[lipoyl-carrier protein] + AMP + diphosphate + H(+). It participates in protein modification; protein lipoylation via exogenous pathway; protein N(6)-(lipoyl)lysine from lipoate: step 1/2. Its pathway is protein modification; protein lipoylation via exogenous pathway; protein N(6)-(lipoyl)lysine from lipoate: step 2/2. In terms of biological role, catalyzes both the ATP-dependent activation of exogenously supplied lipoate to lipoyl-AMP and the transfer of the activated lipoyl onto the lipoyl domains of lipoate-dependent enzymes. This chain is Lipoate-protein ligase A, found in Salmonella arizonae (strain ATCC BAA-731 / CDC346-86 / RSK2980).